The sequence spans 396 residues: MGKEKLILAYSGGLDTSVAIAWLKKDYDVIAVCMDVGEGKDLDFIHDKALTIGAIESYILDVKDEFAEHFVLPALQAHAMYEQKYPLVSALSRPIIAQKLVEMAHQTGATTIAHGCTGKGNDQVRFEVAIAALDPELKVIAPVREWKWHREEEITFAKANGVPIPADLDNPYSIDQNLWGRANECGVLENPWNQAPEEAFGITKSPEEAPDCAEYIDITFQNGKPIAINNQEMTLADLILSLNEIAGKHGIGRIDHVENRLVGIKSREIYECPAAMVLLAAHKEIEDLTLVREVSHFKPILENELSNLIYNALWFSPATKAIIAYVKETQKVVNGTTKVKLYKGSAKVVARHSSNSLYDENLATYTAADNFDQDAAVGFIKLWGLPTQVNAQVNKG.

9–17 is an ATP binding site; that stretch reads AYSGGLDTS. Position 85 (Y85) interacts with L-citrulline. ATP is bound at residue G115. 3 residues coordinate L-aspartate: T117, N121, and D122. N121 is an L-citrulline binding site. L-citrulline-binding residues include R125, S173, E258, and Y270.

This sequence belongs to the argininosuccinate synthase family. Type 1 subfamily. As to quaternary structure, homotetramer.

It is found in the cytoplasm. It carries out the reaction L-citrulline + L-aspartate + ATP = 2-(N(omega)-L-arginino)succinate + AMP + diphosphate + H(+). Its pathway is amino-acid biosynthesis; L-arginine biosynthesis; L-arginine from L-ornithine and carbamoyl phosphate: step 2/3. This chain is Argininosuccinate synthase, found in Streptococcus agalactiae serotype III (strain NEM316).